The primary structure comprises 136 residues: Small ribosomal subunit protein uS9 (136 aa).

The protein belongs to the universal ribosomal protein uS9 family.

The polypeptide is Small ribosomal subunit protein uS9 (Borrelia hermsii (strain HS1 / DAH)).